Reading from the N-terminus, the 241-residue chain is Ubiquinone biosynthesis O-methyltransferase (241 aa).

Arginine 46, glycine 66, aspartate 87, and methionine 131 together coordinate S-adenosyl-L-methionine.

Belongs to the methyltransferase superfamily. UbiG/COQ3 family.

The catalysed reaction is a 3-demethylubiquinol + S-adenosyl-L-methionine = a ubiquinol + S-adenosyl-L-homocysteine + H(+). It carries out the reaction a 3-(all-trans-polyprenyl)benzene-1,2-diol + S-adenosyl-L-methionine = a 2-methoxy-6-(all-trans-polyprenyl)phenol + S-adenosyl-L-homocysteine + H(+). The protein operates within cofactor biosynthesis; ubiquinone biosynthesis. Its function is as follows. O-methyltransferase that catalyzes the 2 O-methylation steps in the ubiquinone biosynthetic pathway. In Bordetella parapertussis (strain 12822 / ATCC BAA-587 / NCTC 13253), this protein is Ubiquinone biosynthesis O-methyltransferase.